A 401-amino-acid chain; its full sequence is Heat shock transcription factor, Y-linked (401 aa).

Polar residues predominate over residues 1–11; it reads MAHVSSETQDV. Residues 1–30 form a disordered region; it reads MAHVSSETQDVSPKDELTASEASTRSPLCE. The DNA-binding element occupies 76–194; that stretch reads LSLNFPRKLW…PQLLVRVKRR (119 aa).

It belongs to the HSF family. In terms of tissue distribution, testis-specific. Present in Sertoli cells and spermatogenic cells (at protein level).

Its subcellular location is the nucleus. It is found in the cytoplasm. This is Heat shock transcription factor, Y-linked (HSFY1) from Homo sapiens (Human).